The chain runs to 460 residues: Tyrosine phenol-lyase (460 aa).

Position 260 is an N6-(pyridoxal phosphate)lysine (Lys260).

Belongs to the beta-eliminating lyase family. As to quaternary structure, homotetramer. Pyridoxal 5'-phosphate serves as cofactor.

It carries out the reaction L-tyrosine + H2O = phenol + pyruvate + NH4(+). This Clostridium tetani (strain Massachusetts / E88) protein is Tyrosine phenol-lyase.